We begin with the raw amino-acid sequence, 318 residues long: Galactinol synthase 1 (318 aa).

Residue lysine 102 is part of the active site. Residues aspartate 118, aspartate 120, and histidine 244 each contribute to the Mn(2+) site.

The protein belongs to the glycosyltransferase 8 family. Galactosyltransferase subfamily. Requires a divalent metal cation as cofactor. Expressed in seeds, mostly in radicle tips.

It is found in the cytoplasm. The catalysed reaction is myo-inositol + UDP-alpha-D-galactose = alpha-D-galactosyl-(1-&gt;3)-1D-myo-inositol + UDP + H(+). Its function is as follows. Galactinol synthase involved in the biosynthesis of raffinose family oligosaccharides (RFOs) that function as osmoprotectants. May promote plant stress tolerance. In Solanum lycopersicum (Tomato), this protein is Galactinol synthase 1 (GOLS1).